A 66-amino-acid polypeptide reads, in one-letter code: Toxin NaTx-4 (66 aa).

Residues 1–64 (KEGYLVNKET…TFPIPGKTCS (64 aa)) enclose the LCN-type CS-alpha/beta domain. 4 cysteine pairs are disulfide-bonded: C12–C63, C16–C39, C25–C44, and C29–C46.

The protein belongs to the long (4 C-C) scorpion toxin superfamily. Sodium channel inhibitor family. In terms of tissue distribution, expressed by the venom gland.

It is found in the secreted. Probable sodium channel inhibitor. In Centruroides sculpturatus (Arizona bark scorpion), this protein is Toxin NaTx-4.